Reading from the N-terminus, the 81-residue chain is ATP synthase subunit c, chloroplastic (81 aa).

The next 2 helical transmembrane spans lie at 3–23 and 57–77; these read AIVS…AAIG and LAFM…LLFA.

The protein belongs to the ATPase C chain family. In terms of assembly, F-type ATPases have 2 components, F(1) - the catalytic core - and F(0) - the membrane proton channel. F(1) has five subunits: alpha(3), beta(3), gamma(1), delta(1), epsilon(1). F(0) has four main subunits: a(1), b(1), b'(1) and c(10-14). The alpha and beta chains form an alternating ring which encloses part of the gamma chain. F(1) is attached to F(0) by a central stalk formed by the gamma and epsilon chains, while a peripheral stalk is formed by the delta, b and b' chains.

It is found in the plastid. Its subcellular location is the chloroplast thylakoid membrane. F(1)F(0) ATP synthase produces ATP from ADP in the presence of a proton or sodium gradient. F-type ATPases consist of two structural domains, F(1) containing the extramembraneous catalytic core and F(0) containing the membrane proton channel, linked together by a central stalk and a peripheral stalk. During catalysis, ATP synthesis in the catalytic domain of F(1) is coupled via a rotary mechanism of the central stalk subunits to proton translocation. Its function is as follows. Key component of the F(0) channel; it plays a direct role in translocation across the membrane. A homomeric c-ring of between 10-14 subunits forms the central stalk rotor element with the F(1) delta and epsilon subunits. The polypeptide is ATP synthase subunit c, chloroplastic (Cyanidioschyzon merolae (strain NIES-3377 / 10D) (Unicellular red alga)).